A 345-amino-acid chain; its full sequence is Methionine import ATP-binding protein MetN (345 aa).

The 240-residue stretch at 2–241 folds into the ABC transporter domain; it reads IKLNNIXKIF…PKTELAQEFI (240 aa). Position 38–45 (38–45) interacts with ATP; the sequence is GASGAGKS.

It belongs to the ABC transporter superfamily. Methionine importer (TC 3.A.1.24) family. In terms of assembly, the complex is composed of two ATP-binding proteins (MetN), two transmembrane proteins (MetI) and a solute-binding protein (MetQ).

It localises to the cell inner membrane. The enzyme catalyses L-methionine(out) + ATP + H2O = L-methionine(in) + ADP + phosphate + H(+). It carries out the reaction D-methionine(out) + ATP + H2O = D-methionine(in) + ADP + phosphate + H(+). Its function is as follows. Part of the ABC transporter complex MetNIQ involved in methionine import. Responsible for energy coupling to the transport system. The sequence is that of Methionine import ATP-binding protein MetN from Haemophilus influenzae (strain ATCC 51907 / DSM 11121 / KW20 / Rd).